Here is a 139-residue protein sequence, read N- to C-terminus: Putative nickel-responsive regulator (139 aa).

His79, His90, His92, and Cys98 together coordinate Ni(2+).

The protein belongs to the transcriptional regulatory CopG/NikR family. The cofactor is Ni(2+).

In terms of biological role, transcriptional regulator. The sequence is that of Putative nickel-responsive regulator from Trichlorobacter lovleyi (strain ATCC BAA-1151 / DSM 17278 / SZ) (Geobacter lovleyi).